The following is a 54-amino-acid chain: uncharacterized protein (54 aa).

Residues 1 to 38 (MFPNSNGPNKMKALVAPSNSSTTSKTNNNNLPPNGRSS) form a disordered region. Low complexity predominate over residues 17–38 (PSNSSTTSKTNNNNLPPNGRSS).

This is an uncharacterized protein from Dictyostelium discoideum (Social amoeba).